The primary structure comprises 705 residues: Polyribonucleotide nucleotidyltransferase (705 aa).

Residues D486 and D492 each coordinate Mg(2+). Positions 553–612 (PRIYTMKINPEKIKDVIGKGGSVIRALTDETGTTIEIEDDGTIKIAATDGDKAKHAIRRI) constitute a KH domain. The region spanning 622 to 690 (GRIYAGKVTR…RQGRIRLSIK (69 aa)) is the S1 motif domain.

Belongs to the polyribonucleotide nucleotidyltransferase family. Component of the RNA degradosome, which is a multiprotein complex involved in RNA processing and mRNA degradation. The cofactor is Mg(2+).

The protein resides in the cytoplasm. It catalyses the reaction RNA(n+1) + phosphate = RNA(n) + a ribonucleoside 5'-diphosphate. Functionally, involved in mRNA degradation. Catalyzes the phosphorolysis of single-stranded polyribonucleotides processively in the 3'- to 5'-direction. The sequence is that of Polyribonucleotide nucleotidyltransferase from Yersinia pseudotuberculosis serotype O:3 (strain YPIII).